Here is a 191-residue protein sequence, read N- to C-terminus: Protein GrpE (191 aa).

Residues 1–21 (MSDKKKNAEEFEETFSDKTSE) show a composition bias toward basic and acidic residues. The disordered stretch occupies residues 1–39 (MSDKKKNAEEFEETFSDKTSEDESTVENETVEENENEDV). Residues 22–38 (DESTVENETVEENENED) show a composition bias toward acidic residues.

This sequence belongs to the GrpE family. Homodimer.

It is found in the cytoplasm. Participates actively in the response to hyperosmotic and heat shock by preventing the aggregation of stress-denatured proteins, in association with DnaK and GrpE. It is the nucleotide exchange factor for DnaK and may function as a thermosensor. Unfolded proteins bind initially to DnaJ; upon interaction with the DnaJ-bound protein, DnaK hydrolyzes its bound ATP, resulting in the formation of a stable complex. GrpE releases ADP from DnaK; ATP binding to DnaK triggers the release of the substrate protein, thus completing the reaction cycle. Several rounds of ATP-dependent interactions between DnaJ, DnaK and GrpE are required for fully efficient folding. The protein is Protein GrpE of Tetragenococcus halophilus (Pediococcus halophilus).